We begin with the raw amino-acid sequence, 242 residues long: MTLDLDASKKDEKLLITTIQQEYKILAEYKMIESEKLSGIYVIPSYENSLQWYGVFFGRQGFYAESVFRFSILLPDRFPDEKSLPSIIFQQDVMHPHVCPFTHTLDISHAFSEWRCGEDHLWQVLKYMQAIFFDPVDSIRGIETDKLKNAEAAELLMNNRQEYAARVQENIKESKAHIYDTPPTEDPHYIVFEKFQPDVHGPVLERIKAGRNKAEASQQANGGHATGLSWVKEGEFKPLSIE.

The UBC core domain maps to Gln-20–Ala-176.

It belongs to the ubiquitin-conjugating enzyme family. FTS subfamily.

The sequence is that of Protein crossbronx (cbx) from Drosophila ananassae (Fruit fly).